The primary structure comprises 726 residues: MLLPRSVSSERAPGVPEPEELWEAEMERLRGSGTPVRGLPYAMMDKRLIWQLREPAGVQTLRWQRWQRRRQTVERRLREAAQRLARGLGLWEGALYEIGGLFGTGIRSYFTFLRFLLLLNLLSLLLTASFVLLPLVWLRPPDPGPTLNLTLQCPGSRQSPPGVLRFHNQLWHVLTGRAFTNTYLFYGAYRVGPESSSVYSIRLAYLLSPLACLLLCFCGTLRRMVKGLPQKTLLGQGYQAPLSAKVFSSWDFCIRVQEAATIKKHEISNEFKVELEEGRRFQLMQQQTRAQTACRLLSYLRVNVLNGLLVVGAISAIFWATKYSQDNKEESLFLLLQYLPPGVIALVNFLGPLLFTFLVQLENYPPNTEVNLTLIWCVVLKLASLGMFSVSLGQTILCIGRDKSSCESYGYNVCDYQCWENSVGEELYKLSIFNFLLTVAFAFLVTLPRRLLVDRFSGRFWAWLEREEFLVPKNVLDIVAGQTVTWMGLFYCPLLPLLNSVFLFLTFYIKKYTLLKNSRASSRPFRASSSTFFFQLVLLLGLLLAAVPLGYVVSSIHSSWDCGLFTNYSAPWQVVPELVALGLPPIGQRALHYLGSHAFSFPLLIMLSLVLTVCVSQTQANARAIHRLRKQLVWQVQEKWHLVEDLSRLLPEPGPSDSPGPKYPASQASRPQSFCPGCPCPGSPGHQAPRPGPSVVDAAGLRSPCPGQHGAPASARRFRFPSGAEL.

Over 1–114 (MLLPRSVSSE…GIRSYFTFLR (114 aa)) the chain is Cytoplasmic. Residue Ser6 is modified to Phosphoserine. The chain crosses the membrane as a helical span at residues 115 to 135 (FLLLLNLLSLLLTASFVLLPL). At 136–200 (VWLRPPDPGP…VGPESSSVYS (65 aa)) the chain is on the lumenal side. Residue Asn148 is glycosylated (N-linked (GlcNAc...) asparagine). The helical transmembrane segment at 201-221 (IRLAYLLSPLACLLLCFCGTL) threads the bilayer. Over 222-299 (RRMVKGLPQK…AQTACRLLSY (78 aa)) the chain is Cytoplasmic. Residues 300-320 (LRVNVLNGLLVVGAISAIFWA) form a helical membrane-spanning segment. The Lumenal segment spans residues 321–338 (TKYSQDNKEESLFLLLQY). A helical membrane pass occupies residues 339–359 (LPPGVIALVNFLGPLLFTFLV). Topologically, residues 360–426 (QLENYPPNTE…QCWENSVGEE (67 aa)) are cytoplasmic. A TMC domain region spans residues 362 to 530 (ENYPPNTEVN…SSRPFRASSS (169 aa)). The helical transmembrane segment at 427–447 (LYKLSIFNFLLTVAFAFLVTL) threads the bilayer. At 448–488 (PRRLLVDRFSGRFWAWLEREEFLVPKNVLDIVAGQTVTWMG) the chain is on the lumenal side. A helical transmembrane segment spans residues 489-509 (LFYCPLLPLLNSVFLFLTFYI). Residues 510 to 531 (KKYTLLKNSRASSRPFRASSST) are Cytoplasmic-facing. Residues 532–552 (FFFQLVLLLGLLLAAVPLGYV) traverse the membrane as a helical segment. The Lumenal segment spans residues 553-594 (VSSIHSSWDCGLFTNYSAPWQVVPELVALGLPPIGQRALHYL). N-linked (GlcNAc...) asparagine glycosylation is present at Asn567. The chain crosses the membrane as a helical span at residues 595–615 (GSHAFSFPLLIMLSLVLTVCV). The Cytoplasmic portion of the chain corresponds to 616-726 (SQTQANARAI…RFRFPSGAEL (111 aa)). The segment at 651–726 (PEPGPSDSPG…RFRFPSGAEL (76 aa)) is disordered. A compositionally biased stretch (pro residues) spans 652 to 662 (EPGPSDSPGPK). Phosphoserine occurs at positions 658 and 673.

It belongs to the TMC family. In terms of assembly, interacts with TMC6. Interacts and forms a complex with TMC6 and CIB1; the interaction stabilizes each component of the complex. Interacts and forms a complex with TMC6 and SLC30A1/ZNT1; the interaction regulates zinc transport into the ER. Interacts with TRADD; the interaction competes with TRADD/RIPK1/TRAF2/cIAPs complex I formation and facilites complex II formation. As to quaternary structure, (Microbial infection) Interacts with human papillomavirus 16/HPV16 protein E5; the interaction alleviates TMC8-mediated transcription factors inhibition. Expressed in placenta, prostate and testis.

Its subcellular location is the endoplasmic reticulum membrane. It localises to the golgi apparatus membrane. The protein localises to the nucleus membrane. Its function is as follows. Acts as a regulatory protein involved in the regulation of numerous cellular processes. Together with its homolog TMC6/EVER1, forms a complex with calcium-binding protein CIB1 in lymphocytes and keratynocytes where TMC6 and TMC8 stabilize CIB1 levels and reciprocally. Together with TMC6, also forms a complex with and activates zinc transporter ZNT1 at the ER membrane of keratynocytes, thereby facilitating zinc uptake into the ER. Also inhibits receptor-mediated calcium release from ER stores and calcium activated and volume regulated chloride channels. Down-regulates the activity of transcription factors induced by zinc and cytokines. Also sequesters TRADD which impairs the recruitment of TRAF2 and RIPK1 in the pro-survival complex I and promotes proapoptotic complex II formation, and may therefore be involved in TNF-induced cell death/survival decisions. This is Transmembrane channel-like protein 8 from Homo sapiens (Human).